A 220-amino-acid chain; its full sequence is Phosphoribosylformylglycinamidine synthase subunit PurQ (220 aa).

In terms of domain architecture, Glutamine amidotransferase type-1 spans 2-220 (RVGVVVFPGS…LRSVLAGAKV (219 aa)). The active-site Nucleophile is the Cys85. Catalysis depends on residues His193 and Glu195.

Part of the FGAM synthase complex composed of 1 PurL, 1 PurQ and 2 PurS subunits.

Its subcellular location is the cytoplasm. It catalyses the reaction N(2)-formyl-N(1)-(5-phospho-beta-D-ribosyl)glycinamide + L-glutamine + ATP + H2O = 2-formamido-N(1)-(5-O-phospho-beta-D-ribosyl)acetamidine + L-glutamate + ADP + phosphate + H(+). The enzyme catalyses L-glutamine + H2O = L-glutamate + NH4(+). Its pathway is purine metabolism; IMP biosynthesis via de novo pathway; 5-amino-1-(5-phospho-D-ribosyl)imidazole from N(2)-formyl-N(1)-(5-phospho-D-ribosyl)glycinamide: step 1/2. Functionally, part of the phosphoribosylformylglycinamidine synthase complex involved in the purines biosynthetic pathway. Catalyzes the ATP-dependent conversion of formylglycinamide ribonucleotide (FGAR) and glutamine to yield formylglycinamidine ribonucleotide (FGAM) and glutamate. The FGAM synthase complex is composed of three subunits. PurQ produces an ammonia molecule by converting glutamine to glutamate. PurL transfers the ammonia molecule to FGAR to form FGAM in an ATP-dependent manner. PurS interacts with PurQ and PurL and is thought to assist in the transfer of the ammonia molecule from PurQ to PurL. This chain is Phosphoribosylformylglycinamidine synthase subunit PurQ, found in Rubrobacter xylanophilus (strain DSM 9941 / JCM 11954 / NBRC 16129 / PRD-1).